A 141-amino-acid chain; its full sequence is MEIRVFRQEDFEEVITLWERCDLLRPWNDPEMDIERKMNHDVSLFLVAEVNGDVVGTVMGGYDGHRGSAYYLGVHPEFRGRGIANALLNRLEKKLIARGCPKIQINVPEDNDMVLGMYERLGYEHADVLSLGKRLIEDEEY.

The N-acetyltransferase domain occupies 1–141 (MEIRVFRQED…GKRLIEDEEY (141 aa)).

It belongs to the acetyltransferase family. YpeA subfamily.

This is Acetyltransferase YpeA (ypeA) from Escherichia coli (strain K12).